The following is a 1102-amino-acid chain: MNHQQQQQQQKAGEQQLSEPEDMEMEAGDTDDPPRITQNPVINGNVALSDGHNTAEEDMEDDTSWRSEATFQFTVERFSRLSESVLSPPCFVRNLPWKIMVMPRFYPDRPHQKSVGFFLQCNAESDSTSWSCHAQAVLKIINYRDDEKSFSRRISHLFFHKENDWGFSNFMAWSEVTDPEKGFIDDDKVTFEVFVQADAPHGVAWDSKKHTGYVGLKNQGATCYMNSLLQTLFFTNQLRKAVYMMPTEGDDSSKSVPLALQRVFYELQHSDKPVGTKKLTKSFGWETLDSFMQHDVQELCRVLLDNVENKMKGTCVEGTIPKLFRGKMVSYIQCKEVDYRSDRREDYYDIQLSIKGKKNIFESFVDYVAVEQLDGDNKYDAGEHGLQEAEKGVKFLTLPPVLHLQLMRFMYDPQTDQNIKINDRFEFPEQLPLDEFLQKTDPKDPANYILHAVLVHSGDNHGGHYVVYLNPKGDGKWCKFDDDVVSRCTKEEAIEHNYGGHDDDLSVRHCTNAYMLVYIRESKLSEVLQAVTDHDIPQQLVERLQEEKRIEAQKRKERQEAHLYMQVQIVAEDQFCGHQGNDMYDEEKVKYTVFKVLKNSSLAEFVQSLSQTMGFPQDQIRLWPMQARSNGTKRPAMLDNEADGNKTMIELSDNENPWTIFLETVDPELAASGATLPKFDKDHDVMLFLKMYDPKTRSLNYCGHIYTPISCKIRDLLPVMCDRAGFIQDTSLILYEEVKPNLTERIQDYDVSLDKALDELMDGDIIVFQKDDPENDNSELPTAKEYFRDLYHRVDVIFCDKTIPNDPGFVVTLSNRMNYFQVAKTVAQRLNTDPMLLQFFKSQGYRDGPGNPLRHNYEGTLRDLLQFFKPRQPKKLYYQQLKMKITDFENRRSFKCIWLNSQFREEEITLYPDKHGCVRDLLEECKKAVELGEKASGKLRLLEIVSYKIIGVHQEDELLECLSPATSRTFRIEEIPLDQVDIDKENEMLVTVAHFHKEVFGTFGIPFLLRIHQGEHFREVMKRIQSLLDIQEKEFEKFKFAIVMMGRHQYINEDEYEVNLKDFEPQPGNMSHPRPWLGLDHFNKAPKRSRYTYLEKAIKIHN.

Low complexity predominate over residues 1–10 (MNHQQQQQQQ). Positions 1 to 38 (MNHQQQQQQQKAGEQQLSEPEDMEMEAGDTDDPPRITQ) are disordered. Residues 1–208 (MNHQQQQQQQ…APHGVAWDSK (208 aa)) form an interaction with TSPYL5 region. At Ser18 the chain carries Phosphoserine. Over residues 19-31 (EPEDMEMEAGDTD) the composition is skewed to acidic residues. Residue Ser49 is modified to Phosphoserine. The segment at 53–208 (NTAEEDMEDD…APHGVAWDSK (156 aa)) is interaction with p53/TP53, MDM2 and EBNA1. Residues 68–195 (EATFQFTVER…DDKVTFEVFV (128 aa)) enclose the MATH domain. Positions 70 to 205 (TFQFTVERFS…QADAPHGVAW (136 aa)) are necessary for nuclear localization. The USP domain occupies 214–521 (VGLKNQGATC…NAYMLVYIRE (308 aa)). Catalysis depends on Cys223, which acts as the Nucleophile. His464 functions as the Proton acceptor in the catalytic mechanism. The interaction with ICP0/VMW110 stretch occupies residues 622–801 (LWPMQARSNG…HRVDVIFCDK (180 aa)). Residue Lys869 is modified to N6-acetyllysine; alternate. Residue Lys869 forms a Glycyl lysine isopeptide (Lys-Gly) (interchain with G-Cter in SUMO2); alternate linkage. A Glycyl lysine isopeptide (Lys-Gly) (interchain with G-Cter in ubiquitin); alternate cross-link involves residue Lys869. Lys882 participates in a covalent cross-link: Glycyl lysine isopeptide (Lys-Gly) (interchain with G-Cter in SUMO2). Residue Ser963 is modified to Phosphoserine. 2 positions are modified to N6-acetyllysine: Lys1084 and Lys1096.

Belongs to the peptidase C19 family. As to quaternary structure, monomer. Homodimer. Part of a complex with DAXX, MDM2, RASSF1 and USP7. Part of a complex with DAXX, MDM2 and USP7. Interacts with MDM2; the interaction is independent of p53/TP53. Interacts with DAXX; the interaction is direct and independent of MDM2 and p53/TP53. Component of a complex composed of KMT2E/MLL5 (isoform 3), OGT (isoform 1) and USP7; the complex stabilizes KMT2E/MLL5, preventing KMT2E/MLL5 ubiquitination and proteasomal-mediated degradation. Interacts (via MATH domain) with KMT2E/MLL5 isoform 3. Interacts with OGT isoform 1. Interacts with FOXO4; the interaction is enhanced in presence of hydrogen peroxide and occurs independently of p53/TP53. Interacts with p53/TP53; the interaction is enhanced in response to DNA damage. Interacts with TSPYL5; this impairs interaction with p53/TP53. Interacts with PTEN; the interaction is direct. Interacts with ATXN1 and the strength of interaction is influenced by the length of the poly-Gln region in ATXN1. A weaker interaction seen with mutants having longer poly-Gln regions. Interacts with KIAA1530/UVSSA. Interacts with ABRAXAS2; the interaction is direct. Identified in a complex with TP53/p53 and ABRAXAS2. Interacts with MEX3C and antagonizes its ability to degrade mRNA. Interacts with DNMT1 and UHRF1. Interacts with FOXP3. Interacts (via MATH domain) with RNF220. Associated component of the Polycomb group (PcG) multiprotein PRC1-like complex. Interacts with EPOP. Interacts with OTUD4 and USP9X; the interaction is direct. Interacts with CRY2. Interacts with REST. Interacts with ERCC6. Part of a complex consisting of USP7, MAGEL2 and TRIM27; directly interacts with MAGEL2; directly interacts with TRIM27. In terms of assembly, (Microbial infection) Isoform 1 and isoform 2 interact with herpesvirus 1 trans-acting transcriptional protein ICP0/VMW110. Binding to ICP0/VMW110 may modulate the substrate specificity or activity of USP7 to stabilize viral proteins. (Microbial infection) Interacts with Epstein-Barr virus EBNA1; the interaction is independent and simultaneous to EBNA1 interaction with USP7 as well as necessary for PML nuclear bodies disruption by EBNA1. EBNA1, USP7 and CSNK2B form a ternary complex. EBNA1 shows a 10-fold higher affinity than p53/TP53 and can compete with it for USP7 binding. As to quaternary structure, (Microbial infection) Interacts with human cytomegalovirus proteins UL35 and UL35A; these interactions inhibit the ability of USP7 to form nuclear bodies. In terms of assembly, (Microbial infection) Interacts with herpes virus 8/HHV-8 proteins vIRF-1 and vIRF-3; these interactions may disrupt TP53 signaling pathway during viral infection by decreasing the availability of USP7 for deubiquitinating and stabilizing TP53. (Microbial infection) Interacts with herpes virus 8/HHV-8 protein vIRF-2; this interaction modulates antiviral signaling via disruption of USP7 interactions with innate immune signaling proteins TRAF3 and TRAF6 thus affecting their ubiquitination. Isoform 1: Phosphorylated. Isoform 1 is phosphorylated at positions Ser-18 and Ser-963. Isoform 2: Not phosphorylated. Post-translationally, isoform 1: Polyneddylated. Isoform 2: Not Polyneddylated. In terms of processing, isoform 1 and isoform 2: Not sumoylated. Isoform 1 and isoform 2: Polyubiquitinated by herpesvirus 1 trans-acting transcriptional protein ICP0/VMW110; leading to its subsequent proteasomal degradation. Isoform 1: Ubiquitinated at Lys-869. In terms of tissue distribution, expressed in neural progenitor cells (at protein level). Widely expressed. Overexpressed in prostate cancer.

The protein localises to the nucleus. The protein resides in the cytoplasm. It localises to the PML body. Its subcellular location is the chromosome. The enzyme catalyses Thiol-dependent hydrolysis of ester, thioester, amide, peptide and isopeptide bonds formed by the C-terminal Gly of ubiquitin (a 76-residue protein attached to proteins as an intracellular targeting signal).. With respect to regulation, inhibited by N-ethyl-maleimide (NEM) and divalent cations. Tolerates high concentrations of NaCl but is inhibited at concentrations of 195 mM and higher. In terms of biological role, hydrolase that deubiquitinates target proteins such as ARMC5, FOXO4, DEPTOR, KAT5, p53/TP53, MDM2, ERCC6, DNMT1, UHRF1, PTEN, KMT2E/MLL5 and DAXX. Together with DAXX, prevents MDM2 self-ubiquitination and enhances the E3 ligase activity of MDM2 towards p53/TP53, thereby promoting p53/TP53 ubiquitination and proteasomal degradation. Deubiquitinates p53/TP53, preventing degradation of p53/TP53, and enhances p53/TP53-dependent transcription regulation, cell growth repression and apoptosis. Deubiquitinates p53/TP53 and MDM2 and strongly stabilizes p53/TP53 even in the presence of excess MDM2, and also induces p53/TP53-dependent cell growth repression and apoptosis. Deubiquitination of FOXO4 in presence of hydrogen peroxide is not dependent on p53/TP53 and inhibits FOXO4-induced transcriptional activity. In association with DAXX, is involved in the deubiquitination and translocation of PTEN from the nucleus to the cytoplasm, both processes that are counteracted by PML. Deubiquitinates KMT2E/MLL5 preventing KMT2E/MLL5 proteasomal-mediated degradation. Involved in cell proliferation during early embryonic development. Involved in transcription-coupled nucleotide excision repair (TC-NER) in response to UV damage: recruited to DNA damage sites following interaction with KIAA1530/UVSSA and promotes deubiquitination of ERCC6, preventing UV-induced degradation of ERCC6. Involved in maintenance of DNA methylation via its interaction with UHRF1 and DNMT1: acts by mediating deubiquitination of UHRF1 and DNMT1, preventing their degradation and promoting DNA methylation by DNMT1. Deubiquitinates alkylation repair enzyme ALKBH3. OTUD4 recruits USP7 and USP9X to stabilize ALKBH3, thereby promoting the repair of alkylated DNA lesions. Acts as a chromatin regulator via its association with the Polycomb group (PcG) multiprotein PRC1-like complex; may act by deubiquitinating components of the PRC1-like complex. Able to mediate deubiquitination of histone H2B; it is however unsure whether this activity takes place in vivo. Exhibits a preference towards 'Lys-48'-linked ubiquitin chains. Increases regulatory T-cells (Treg) suppressive capacity by deubiquitinating and stabilizing the transcription factor FOXP3 which is crucial for Treg cell function. Plays a role in the maintenance of the circadian clock periodicity via deubiquitination and stabilization of the CRY1 and CRY2 proteins. Deubiquitinates REST, thereby stabilizing REST and promoting the maintenance of neural progenitor cells. Deubiquitinates SIRT7, inhibiting SIRT7 histone deacetylase activity and regulating gluconeogenesis. Involved in the regulation of WASH-dependent actin polymerization at the surface of endosomes and the regulation of endosomal protein recycling. It maintains optimal WASH complex activity and precise F-actin levels via deubiquitination of TRIM27 and WASHC1. Mediates the deubiquitination of phosphorylated DEPTOR, promoting its stability and leading to decreased mTORC1 signaling. (Microbial infection) Contributes to the overall stabilization and trans-activation capability of the herpesvirus 1 trans-acting transcriptional protein ICP0/VMW110 during HSV-1 infection. Functionally, (Microbial infection) Upon infection with Epstein-Barr virus, the interaction with viral EBNA1 increases the association of USP7 with PML proteins, which is required for the polyubiquitylation and degradation of PML. This Homo sapiens (Human) protein is Ubiquitin carboxyl-terminal hydrolase 7.